Here is a 500-residue protein sequence, read N- to C-terminus: Probable transcription factor FPSE_09189 (500 aa).

Disordered regions lie at residues 161–197 and 457–500; these read MVRH…PSLA and IRTG…TQLE. The segment covering 459–474 has biased composition (basic and acidic residues); the sequence is TGHEDSSRDGGRENKA. Positions 475–484 are enriched in polar residues; sequence MNRNRSTGNS.

It is found in the nucleus. Functionally, the two putative transcription factors FPSE_09188 and FPSE_09189 could be responsible for orchestrating expression of the W493 A and B biosynthesis cluster genes. W493 A and B consist of six amino acid residues D-allo-thr, L-Ala, D-Ala, L-Gln, D-Tyr, and L-Val/L-Ile linked to a 3-hydroxy-4-methyltetradecanoic acid polyketide chain. In Fusarium pseudograminearum (strain CS3096) (Wheat and barley crown-rot fungus), this protein is Probable transcription factor FPSE_09189.